We begin with the raw amino-acid sequence, 180 residues long: Sec-independent protein translocase protein TatB (180 aa).

The helical transmembrane segment at 1–21 threads the bilayer; that stretch reads MFDIGWSELLVIGVVALIAIG. A disordered region spans residues 95 to 180; that stretch reads IEGVDKPVES…AERLKDAKAS (86 aa). The segment covering 103–123 has biased composition (low complexity); it reads ESQPAASAAPETSATVEAPAT. Basic and acidic residues predominate over residues 170-180; the sequence is EAERLKDAKAS.

The protein belongs to the TatB family. As to quaternary structure, the Tat system comprises two distinct complexes: a TatABC complex, containing multiple copies of TatA, TatB and TatC subunits, and a separate TatA complex, containing only TatA subunits. Substrates initially bind to the TatABC complex, which probably triggers association of the separate TatA complex to form the active translocon.

The protein localises to the cell inner membrane. In terms of biological role, part of the twin-arginine translocation (Tat) system that transports large folded proteins containing a characteristic twin-arginine motif in their signal peptide across membranes. Together with TatC, TatB is part of a receptor directly interacting with Tat signal peptides. TatB may form an oligomeric binding site that transiently accommodates folded Tat precursor proteins before their translocation. In Bradyrhizobium sp. (strain BTAi1 / ATCC BAA-1182), this protein is Sec-independent protein translocase protein TatB.